Here is a 255-residue protein sequence, read N- to C-terminus: Geranylgeranylglyceryl phosphate synthase (255 aa).

The Mg(2+) site is built by Asp34 and Thr64. Sn-glycerol 1-phosphate-binding positions include 182–188, 213–214, and 235–236; these read YLEAGSG, GG, and GN.

Belongs to the GGGP/HepGP synthase family. Group II subfamily. The cofactor is Mg(2+).

The protein localises to the cytoplasm. It carries out the reaction sn-glycerol 1-phosphate + (2E,6E,10E)-geranylgeranyl diphosphate = sn-3-O-(geranylgeranyl)glycerol 1-phosphate + diphosphate. It functions in the pathway membrane lipid metabolism; glycerophospholipid metabolism. In terms of biological role, prenyltransferase that catalyzes the transfer of the geranylgeranyl moiety of geranylgeranyl diphosphate (GGPP) to the C3 hydroxyl of sn-glycerol-1-phosphate (G1P). This reaction is the first ether-bond-formation step in the biosynthesis of archaeal membrane lipids. The sequence is that of Geranylgeranylglyceryl phosphate synthase from Saccharolobus islandicus (strain M.14.25 / Kamchatka #1) (Sulfolobus islandicus).